The following is a 394-amino-acid chain: uncharacterized protein (394 aa).

A run of 11 helical transmembrane segments spans residues 10–30 (PALI…NYYA), 50–70 (FIVT…VPLG), 79–99 (IVSM…SQSL), 100–120 (AMMI…QILV), 138–158 (TIMS…GLLA), 166–186 (VFWV…RGLP), 218–238 (LLGC…AFLL), 243–263 (FNYS…GALG), 291–311 (WLAI…ILVL), 337–357 (LTAG…LISA), and 364–384 (GWAG…LVWW).

This sequence belongs to the major facilitator superfamily.

It localises to the cell inner membrane. This is an uncharacterized protein from Escherichia coli (strain K12).